We begin with the raw amino-acid sequence, 250 residues long: Formylaminopyrimidine transport permease protein ThiX (250 aa).

Transmembrane regions (helical) follow at residues 5-25, 62-82, 94-114, 115-135, 172-192, and 216-236; these read YQAL…EISA, IISI…LLMF, LLVA…VLWF, GYSI…PITV, LPSF…GAAV, and PGVF…FAAI. Residues 56–237 form the ABC transmembrane type-1 domain; sequence LPATLAIISI…LGILGFAAIK (182 aa).

It belongs to the binding-protein-dependent transport system permease family. As to quaternary structure, the complex is likely composed of an ATP-binding protein (ThiZ), a transmembrane protein (ThiX) and a solute-binding protein (ThiY).

The protein localises to the cell membrane. It functions in the pathway cofactor biosynthesis; thiamine diphosphate biosynthesis. Participates in a thiamine pyrimidine salvage pathway as part of the ABC transporter complex ThiXYZ involved in the import of thiamine degradation products such as the formylaminopyrimidine N-formyl-4-amino-5-aminomethyl-2-methylpyrimidine (FAMP). Is probably responsible for the translocation of the substrate across the membrane. This is Formylaminopyrimidine transport permease protein ThiX from Halalkalibacterium halodurans (strain ATCC BAA-125 / DSM 18197 / FERM 7344 / JCM 9153 / C-125) (Bacillus halodurans).